Reading from the N-terminus, the 299-residue chain is Riboflavin transporter ImpX (299 aa).

2 EamA domains span residues 6-144 (KGAL…YLLT) and 162-294 (SLYS…SIIK). The next 10 membrane-spanning stretches (helical) occupy residues 7–27 (GALL…ALTP), 34–54 (VPFV…ILFG), 68–88 (DLFF…LCIV), 101–121 (VVTL…RLLL), 129–149 (YLFW…EFHL), 158–178 (LLPA…ATVF), 202–222 (IMFV…ATAG), 224–244 (WLIF…LYYF), 253–273 (VATM…YLIN), and 276–296 (VLSP…IKIS).

It belongs to the EamA transporter family.

Its subcellular location is the cell membrane. Transports riboflavin into the cell. This chain is Riboflavin transporter ImpX, found in Fusobacterium nucleatum subsp. nucleatum (strain ATCC 23726 / VPI 4351).